The chain runs to 488 residues: GTPase Der (488 aa).

2 EngA-type G domains span residues Pro-3 to Met-166 and Ile-199 to Thr-372. GTP contacts are provided by residues Gly-9 to Ser-16, Asp-56 to Ile-60, Asn-118 to Asp-121, Gly-205 to Ser-212, Asp-252 to Val-256, and Asn-317 to Asp-320. A KH-like domain is found at Arg-373 to Asp-457.

Belongs to the TRAFAC class TrmE-Era-EngA-EngB-Septin-like GTPase superfamily. EngA (Der) GTPase family. Associates with the 50S ribosomal subunit.

GTPase that plays an essential role in the late steps of ribosome biogenesis. This chain is GTPase Der, found in Shewanella sp. (strain ANA-3).